Here is a 508-residue protein sequence, read N- to C-terminus: GMP synthase [glutamine-hydrolyzing] (508 aa).

The Glutamine amidotransferase type-1 domain maps to 1–189 (MILVLDFGSQ…ALLVCGCEKT (189 aa)). The Nucleophile role is filled by C78. Residues H163 and E165 contribute to the active site. The region spanning 190 to 383 (WGMQHFAQRE…LGVSQDFLMR (194 aa)) is the GMPS ATP-PPase domain. 217-223 (SGGVDST) contributes to the ATP binding site.

In terms of assembly, homodimer.

It carries out the reaction XMP + L-glutamine + ATP + H2O = GMP + L-glutamate + AMP + diphosphate + 2 H(+). It participates in purine metabolism; GMP biosynthesis; GMP from XMP (L-Gln route): step 1/1. In terms of biological role, catalyzes the synthesis of GMP from XMP. The protein is GMP synthase [glutamine-hydrolyzing] of Helicobacter pylori (strain P12).